Reading from the N-terminus, the 469-residue chain is Glutamate--tRNA ligase (469 aa).

A 'HIGH' region motif is present at residues 9–19 (PSPTGFLHVGG). Zn(2+) contacts are provided by cysteine 98, cysteine 100, cysteine 125, and aspartate 127. Residues 236–240 (KLSKR) carry the 'KMSKS' region motif. Lysine 239 provides a ligand contact to ATP.

Belongs to the class-I aminoacyl-tRNA synthetase family. Glutamate--tRNA ligase type 1 subfamily. As to quaternary structure, monomer. Zn(2+) serves as cofactor.

The protein localises to the cytoplasm. The catalysed reaction is tRNA(Glu) + L-glutamate + ATP = L-glutamyl-tRNA(Glu) + AMP + diphosphate. Functionally, catalyzes the attachment of glutamate to tRNA(Glu) in a two-step reaction: glutamate is first activated by ATP to form Glu-AMP and then transferred to the acceptor end of tRNA(Glu). This chain is Glutamate--tRNA ligase, found in Shewanella sp. (strain ANA-3).